The chain runs to 695 residues: Follicle-stimulating hormone receptor (695 aa).

The N-terminal stretch at 1 to 17 is a signal peptide; that stretch reads MALLLVSLLAFMSLGSG. Intrachain disulfides connect cysteine 18/cysteine 25 and cysteine 23/cysteine 32. Residues 18–46 enclose the LRRNT domain; the sequence is CHHRLCHCSNRVFLCQESKVTEIPSDLPR. The Extracellular portion of the chain corresponds to 18-366; that stretch reads CHHRLCHCSN…EDIMGYNILR (349 aa). LRR repeat units lie at residues 49–72, 73–97, 98–118, 119–143, 144–169, 170–192, 193–216, 217–240, and 241–259; these read VELRFVLTKLRVIPKGAFSGFGDL, EKIEISQNDALEVIEADVFSNLPNL, HEIRIEKANNLLYINPEAFQN, LPNLRYLLISNTGIRHLPAVHKIQS, LQKVLLDIQDNINIHTVERNSFLGLS, SESVILRLNKNGIQEIQNCAFNG, TQLDDLNLSDNDNLEELPNGVFQG, ASGPVILDISRTRINSLPSHGLEN, and LKKLRARSTYNLKKLPSLE. N-linked (GlcNAc...) asparagine glycans are attached at residues asparagine 191 and asparagine 199. Intrachain disulfides connect cysteine 275/cysteine 346, cysteine 276/cysteine 292, cysteine 276/cysteine 356, and cysteine 292/cysteine 338. N-linked (GlcNAc...) asparagine glycosylation occurs at asparagine 293. At tyrosine 335 the chain carries Sulfotyrosine. The helical transmembrane segment at 367–387 threads the bilayer; that stretch reads VLIWFISILAITGNVAVLVVL. At 388-398 the chain is on the cytoplasmic side; the sequence is TTSQYKLTVPR. A helical membrane pass occupies residues 399 to 421; it reads FLMCNLAFADLCIGIYLLLIASV. Over 422–443 the chain is Extracellular; it reads DVHTRTLYHNYAIDWQTGAGCA. Residues cysteine 442 and cysteine 517 are joined by a disulfide bond. The chain crosses the membrane as a helical span at residues 444 to 465; it reads DCWLFTVFASELSVYTLTAITL. Over 466 to 485 the chain is Cytoplasmic; the sequence is ERWHTITHAMQLDCKVQLRH. Residues 486–508 form a helical membrane-spanning segment; it reads AASIMVIGWIFSSAAALFPIFGV. The Extracellular portion of the chain corresponds to 509–528; sequence SSYMKVSICLPMDIDSPLSQ. The chain crosses the membrane as a helical span at residues 529-550; the sequence is LYVMFLLVLNVLAFVVICGCYL. Residues 551-573 lie on the Cytoplasmic side of the membrane; the sequence is HIYLTVRNPNIVSSASDTRIAKR. A helical membrane pass occupies residues 574-597; it reads MATLIFTDFLCMAPISFFAISASL. The Extracellular segment spans residues 598-608; sequence KVPLITVSKAK. A helical membrane pass occupies residues 609–630; that stretch reads ILLVLFYPINSCANPFLYAIFT. Residues 631-695 lie on the Cytoplasmic side of the membrane; sequence KNFRRDLFIL…LAPLNHLAQN (65 aa). Positions 658 to 677 are disordered; it reads TSSTAHNSHPRNGHSSSVSR.

This sequence belongs to the G-protein coupled receptor 1 family. FSH/LSH/TSH subfamily. In terms of assembly, homotrimer. Functions as a homotrimer binding the FSH hormone heterodimer composed of CGA and FSHB. Interacts with ARRB2. Interacts with APPL2; interaction is independent of follicle stimulating hormone stimulation. Post-translationally, N-glycosylated; indirectly required for FSH-binding, possibly via a conformational change that allows high affinity binding of hormone. Sulfated.

The protein resides in the cell membrane. Functionally, g protein-coupled receptor for follitropin, the follicle-stimulating hormone. Through cAMP production activates the downstream PI3K-AKT and ERK1/ERK2 signaling pathways. This is Follicle-stimulating hormone receptor (FSHR) from Cavia porcellus (Guinea pig).